A 122-amino-acid polypeptide reads, in one-letter code: UPF0102 protein RL0336 (122 aa).

This sequence belongs to the UPF0102 family.

The sequence is that of UPF0102 protein RL0336 from Rhizobium johnstonii (strain DSM 114642 / LMG 32736 / 3841) (Rhizobium leguminosarum bv. viciae).